The primary structure comprises 244 residues: Phosphoadenosine 5'-phosphosulfate reductase (244 aa).

Cys239 acts as the Nucleophile; cysteine thiosulfonate intermediate in catalysis.

Belongs to the PAPS reductase family. CysH subfamily.

Its subcellular location is the cytoplasm. The enzyme catalyses [thioredoxin]-disulfide + sulfite + adenosine 3',5'-bisphosphate + 2 H(+) = [thioredoxin]-dithiol + 3'-phosphoadenylyl sulfate. The protein operates within sulfur metabolism; hydrogen sulfide biosynthesis; sulfite from sulfate: step 3/3. In terms of biological role, catalyzes the formation of sulfite from phosphoadenosine 5'-phosphosulfate (PAPS) using thioredoxin as an electron donor. The chain is Phosphoadenosine 5'-phosphosulfate reductase from Escherichia coli O81 (strain ED1a).